Consider the following 508-residue polypeptide: Maturase K (508 aa).

Belongs to the intron maturase 2 family. MatK subfamily.

It localises to the plastid. The protein resides in the chloroplast. In terms of biological role, usually encoded in the trnK tRNA gene intron. Probably assists in splicing its own and other chloroplast group II introns. The polypeptide is Maturase K (Wolffia arrhiza (Rootless water-meal)).